A 502-amino-acid polypeptide reads, in one-letter code: Hippocampus abundant transcript-like protein 1 (502 aa).

Residues 1 to 12 are compositionally biased toward basic and acidic residues; it reads MNAEPPEEKAAS. Residues 1–27 form a disordered region; that stretch reads MNAEPPEEKAASEAEAGAMPEKRAGSR. Residues 1–46 are Extracellular-facing; that stretch reads MNAEPPEEKAASEAEAGAMPEKRAGSRAAGGNSLQGFGRPSVYHAA. The chain crosses the membrane as a helical span at residues 47 to 67; the sequence is IVIFLEFFAWGLLTTSMLTVL. Over 68-79 the chain is Cytoplasmic; that stretch reads HETFPQHTFLMN. The chain crosses the membrane as a helical span at residues 80-100; the sequence is GLIQGVKGLLSFLSAPLIGAL. Topologically, residues 101–108 are extracellular; it reads SDVWGRKP. Residues 109 to 129 form a helical membrane-spanning segment; the sequence is FLLGTVFFTCFPIPLMRISPW. The Cytoplasmic portion of the chain corresponds to 130–131; sequence WY. A helical transmembrane segment spans residues 132 to 152; that stretch reads FAMISISGVFSVTFSVIFAYV. The Extracellular portion of the chain corresponds to 153-165; that stretch reads ADVTQEHERSTAY. A helical transmembrane segment spans residues 166–186; that stretch reads GWVSATFAASLVSSPAIGAYL. The Cytoplasmic portion of the chain corresponds to 187–193; sequence SASYGDS. Residues 194 to 214 traverse the membrane as a helical segment; the sequence is LVVLVATVVALLDICFILLAV. The Extracellular portion of the chain corresponds to 215–248; it reads PESLPEKMRPLSWGARISWKQADPFASLKKVGKD. Residues 249–269 traverse the membrane as a helical segment; sequence STILLICITVFLSYLPEAGQY. Residues 270–278 lie on the Cytoplasmic side of the membrane; it reads SSFFLYLRQ. Residues 279 to 299 form a helical membrane-spanning segment; that stretch reads VIGFGSIKIAAFIAMVGILSI. Residues 300 to 316 are Extracellular-facing; that stretch reads VAQTVFLTSLMRSLGNK. A helical membrane pass occupies residues 317 to 337; it reads NTVLLGLGFQMFQLAWYGFGS. Residue Q338 is a topological domain, cytoplasmic. The chain crosses the membrane as a helical span at residues 339–359; sequence AWMMWAAGIVAAVSSITFPAV. At 360–384 the chain is on the extracellular side; sequence STLVSQNADSNQQGVAQGIITGIRG. The helical transmembrane segment at 385 to 405 threads the bilayer; that stretch reads LCNGLGPALYGFIFYMFHVEL. The Cytoplasmic portion of the chain corresponds to 406 to 425; that stretch reads TELEPELISNNAALQGAVIP. The helical transmembrane segment at 426 to 446 threads the bilayer; sequence GPPFLFGACIVFMSFLVAVFI. Residues 447 to 502 lie on the Extracellular side of the membrane; sequence PEYSKGGIQKHSNSISGSLANTPERGSDEDIEPLLQDSSIWELSSLEEPGHQCTEL.

This sequence belongs to the major facilitator superfamily.

It is found in the membrane. The chain is Hippocampus abundant transcript-like protein 1 from Bos taurus (Bovine).